Here is a 323-residue protein sequence, read N- to C-terminus: MDSKHQCVKLNDGHFMPVLGFGTYAPPEVPRSKALEVTKLAIEAGFRHIDSAHLYNNEEQVGLAIRSKIADGSVKREDIFYTSKLWSTFHRPELVRPALENSLKKAQLDYVDLYLIHSPMSLKPGEELSPTDENGKVIFDIVDLCTTWEAMEKCKDAGLAKSIGVSNFNRRQLEMILNKPGLKYKPVCNQVECHPYFNRSKLLDFCKSKDIVLVAYSALGSQRDKRWVDPNSPVLLEDPVLCALAKKHKRTPALIALRYQLQRGVVVLAKSYNEQRIRQNVQVFEFQLTAEDMKAIDGLDRNLHYFNSDSFASHPNYPYSDEY.

NADP(+) contacts are provided by residues 23–24 (TY) and Asp-50. The active-site Proton donor is the Tyr-55. His-117 lines the substrate pocket. NADP(+)-binding positions include 166 to 167 (SN), Gln-190, 216 to 222 (YSALGSQ), 270 to 272 (KSY), and 276 to 280 (RIRQN).

This sequence belongs to the aldo/keto reductase family. Expressed in many tissues including adrenal gland, brain, kidney, liver, lung, mammary gland, placenta, small intestine, colon, spleen, prostate and testis. High expression in prostate and mammary gland. In the prostate, higher levels in epithelial cells than in stromal cells. In the brain, expressed in medulla, spinal cord, frontotemporal lobes, thalamus, subthalamic nuclei and amygdala. Weaker expression in the hippocampus, substantia nigra and caudate.

The protein resides in the cytoplasm. It carries out the reaction a 3alpha-hydroxysteroid + NADP(+) = a 3-oxosteroid + NADPH + H(+). The catalysed reaction is a 3alpha-hydroxysteroid + NAD(+) = a 3-oxosteroid + NADH + H(+). The enzyme catalyses prostaglandin F2alpha + NADP(+) = prostaglandin D2 + NADPH + H(+). It catalyses the reaction prostaglandin F2alpha + NADP(+) = prostaglandin H2 + NADPH + H(+). It carries out the reaction prostaglandin D2 + NADPH + H(+) = 11beta-prostaglandin F2 + NADP(+). The catalysed reaction is prostaglandin D2-ethanolamide + NADPH + H(+) = 11beta-prostaglandin F2-ethanolamide + NADP(+). The enzyme catalyses testosterone + NAD(+) = androst-4-ene-3,17-dione + NADH + H(+). It catalyses the reaction testosterone + NADP(+) = androst-4-ene-3,17-dione + NADPH + H(+). It carries out the reaction 17beta-estradiol + NADP(+) = estrone + NADPH + H(+). The catalysed reaction is 17beta-estradiol + NAD(+) = estrone + NADH + H(+). The enzyme catalyses (20S)-hydroxypregn-4-en-3-one + NADP(+) = progesterone + NADPH + H(+). It catalyses the reaction (20S)-hydroxypregn-4-en-3-one + NAD(+) = progesterone + NADH + H(+). It carries out the reaction 5alpha-androstane-3alpha,17beta-diol + NADP(+) = 17beta-hydroxy-5alpha-androstan-3-one + NADPH + H(+). The catalysed reaction is 5alpha-androstane-3alpha,17beta-diol + NAD(+) = 17beta-hydroxy-5alpha-androstan-3-one + NADH + H(+). The enzyme catalyses androsterone + NADPH + H(+) = 5alpha-androstane-3alpha,17beta-diol + NADP(+). It catalyses the reaction 5alpha-androstane-3alpha,17beta-diol + NAD(+) = androsterone + NADH + H(+). It carries out the reaction 5alpha-androstane-3beta,17beta-diol + NADP(+) = 17beta-hydroxy-5alpha-androstan-3-one + NADPH + H(+). The catalysed reaction is 9-cis-retinol + NADP(+) = 9-cis-retinal + NADPH + H(+). It functions in the pathway steroid metabolism. Strongly inhibited by nonsteroidal anti-inflammatory drugs (NSAID) including flufenamic acid and indomethacin. Also inhibited by the flavinoid, rutin, and by selective serotonin inhibitors (SSRIs). The oxidation reaction is inhibited by low micromolar concentrations of NADPH. Cytosolic aldo-keto reductase that catalyzes the NADH and NADPH-dependent reduction of ketosteroids to hydroxysteroids. Acts as a NAD(P)(H)-dependent 3-, 17- and 20-ketosteroid reductase on the steroid nucleus and side chain and regulates the metabolism of androgens, estrogens and progesterone. Displays the ability to catalyze both oxidation and reduction in vitro, but most probably acts as a reductase in vivo since the oxidase activity measured in vitro is inhibited by physiological concentration of NADPH. Acts preferentially as a 17-ketosteroid reductase and has the highest catalytic efficiency of the AKR1C enzyme for the reduction of delta4-androstenedione to form testosterone. Reduces prostaglandin (PG) D2 to 11beta-prostaglandin F2, progesterone to 20alpha-hydroxyprogesterone and estrone to 17beta-estradiol. Catalyzes the transformation of the potent androgen dihydrotestosterone (DHT) into the less active form, 5-alpha-androstan-3-alpha,17-beta-diol (3-alpha-diol). Also displays retinaldehyde reductase activity toward 9-cis-retinal. This Homo sapiens (Human) protein is Aldo-keto reductase family 1 member C3 (AKR1C3).